A 237-amino-acid polypeptide reads, in one-letter code: tRNA1(Val) (adenine(37)-N6)-methyltransferase (237 aa).

This sequence belongs to the methyltransferase superfamily. tRNA (adenine-N(6)-)-methyltransferase family.

The protein resides in the cytoplasm. It catalyses the reaction adenosine(37) in tRNA1(Val) + S-adenosyl-L-methionine = N(6)-methyladenosine(37) in tRNA1(Val) + S-adenosyl-L-homocysteine + H(+). In terms of biological role, specifically methylates the adenine in position 37 of tRNA(1)(Val) (anticodon cmo5UAC). This Bacteroides fragilis (strain ATCC 25285 / DSM 2151 / CCUG 4856 / JCM 11019 / LMG 10263 / NCTC 9343 / Onslow / VPI 2553 / EN-2) protein is tRNA1(Val) (adenine(37)-N6)-methyltransferase.